A 570-amino-acid chain; its full sequence is Sulfite reductase [NADPH] hemoprotein beta-component (570 aa).

[4Fe-4S] cluster is bound by residues C434, C440, C479, and C483. C483 lines the siroheme pocket.

Belongs to the nitrite and sulfite reductase 4Fe-4S domain family. In terms of assembly, alpha(8)-beta(8). The alpha component is a flavoprotein, the beta component is a hemoprotein. Requires siroheme as cofactor. [4Fe-4S] cluster is required as a cofactor.

The enzyme catalyses hydrogen sulfide + 3 NADP(+) + 3 H2O = sulfite + 3 NADPH + 4 H(+). The protein operates within sulfur metabolism; hydrogen sulfide biosynthesis; hydrogen sulfide from sulfite (NADPH route): step 1/1. Its function is as follows. Component of the sulfite reductase complex that catalyzes the 6-electron reduction of sulfite to sulfide. This is one of several activities required for the biosynthesis of L-cysteine from sulfate. This chain is Sulfite reductase [NADPH] hemoprotein beta-component, found in Escherichia coli (strain SMS-3-5 / SECEC).